A 723-amino-acid polypeptide reads, in one-letter code: Malate synthase G (723 aa).

Acetyl-CoA-binding positions include Val118, 125–126 (RY), Ser274, and Arg311. The active-site Proton acceptor is the Arg338. Residues Arg338, Glu427, and 452-455 (GFLD) contribute to the glyoxylate site. Mg(2+) is bound by residues Glu427 and Asp455. Residue Pro536 coordinates acetyl-CoA. Cysteine sulfenic acid (-SOH) is present on Cys617. The active-site Proton donor is the Asp631. Cys688 is modified (cysteine sulfenic acid (-SOH)).

Belongs to the malate synthase family. GlcB subfamily. Monomer. Mg(2+) serves as cofactor.

Its subcellular location is the cytoplasm. It carries out the reaction glyoxylate + acetyl-CoA + H2O = (S)-malate + CoA + H(+). It participates in carbohydrate metabolism; glyoxylate cycle; (S)-malate from isocitrate: step 2/2. Involved in the glycolate utilization. Catalyzes the condensation and subsequent hydrolysis of acetyl-coenzyme A (acetyl-CoA) and glyoxylate to form malate and CoA. The protein is Malate synthase G of Shigella flexneri.